Consider the following 78-residue polypeptide: MSQPDPVKKKRPPVKEEDLKGARGNLSKNQEIKSKTYQVMKQCEQMGSAAPSIFSRARTGSETVFEKSKDEPPKSVFG.

Disordered regions lie at residues 1 to 33 (MSQP…QEIK) and 45 to 78 (QMGS…SVFG). Positions 6-14 (PVKKKRPPV) match the Nuclear localization signal motif. Residues 64-78 (VFEKSKDEPPKSVFG) are compositionally biased toward basic and acidic residues.

This sequence belongs to the MUSTN1 family. In terms of tissue distribution, predominantly expressed in heart and skeletal muscle. Detected in skeletal muscle satellite cells where expression increases with cell proliferation.

It localises to the nucleus. Its function is as follows. Promotes the differentiation and proliferation of skeletal muscle satellite cells. This Gallus gallus (Chicken) protein is Musculoskeletal embryonic nuclear protein 1 (MUSTN1).